The following is a 100-amino-acid chain: Integration host factor subunit alpha (100 aa).

It belongs to the bacterial histone-like protein family. As to quaternary structure, heterodimer of an alpha and a beta chain.

This protein is one of the two subunits of integration host factor, a specific DNA-binding protein that functions in genetic recombination as well as in transcriptional and translational control. In Ruegeria sp. (strain TM1040) (Silicibacter sp.), this protein is Integration host factor subunit alpha.